The following is a 241-amino-acid chain: NEP1-interacting protein 2 (241 aa).

Residues methionine 1–serine 20 form a disordered region. At methionine 1 to histidine 36 the chain is on the lumenal, thylakoid side. The chain crosses the membrane as a helical span at residues phenylalanine 37 to leucine 57. Over valine 58–serine 76 the chain is Stromal. A helical transmembrane segment spans residues glycine 77–phenylalanine 97. Topologically, residues glutamate 98 to serine 109 are lumenal, thylakoid. A helical transmembrane segment spans residues glycine 110–valine 130. The Stromal portion of the chain corresponds to arginine 131 to isoleucine 241. Residues cysteine 196–arginine 238 form an RING-type; atypical zinc finger.

Belongs to the RING-type zinc finger family. NIP subfamily. As to quaternary structure, interacts with RPOT2.

Its subcellular location is the plastid. It is found in the chloroplast thylakoid membrane. Its function is as follows. Intrinsic thylakoid membrane protein that fixes RPOT2 on the stromal side of the thylakoid membrane. This chain is NEP1-interacting protein 2 (NIP2), found in Arabidopsis thaliana (Mouse-ear cress).